We begin with the raw amino-acid sequence, 234 residues long: uncharacterized protein (234 aa).

2 disordered regions span residues 1 to 65 (MTSV…RRGP) and 182 to 234 (ARGA…GRKT).

This is an uncharacterized protein from Homo sapiens (Human).